Reading from the N-terminus, the 579-residue chain is F-box protein At5g39450 (579 aa).

The F-box domain occupies 16 to 62; that stretch reads TCLLLSLPEDVIAVIARFVSPRDICNLSLCCKSLCDVVDSERIWLVQ.

The protein is F-box protein At5g39450 of Arabidopsis thaliana (Mouse-ear cress).